The primary structure comprises 203 residues: Small ribosomal subunit protein uS4 (203 aa).

A disordered region spans residues 15–46; the sequence is LGENIWGRPKSSVNRRSYGPGQHGQRRKSKVS. The 61-residue stretch at 94–154 folds into the S4 RNA-binding domain; it reads QRLDMVVYRA…KKAKEMALIA (61 aa).

Belongs to the universal ribosomal protein uS4 family. Part of the 30S ribosomal subunit. Contacts protein S5. The interaction surface between S4 and S5 is involved in control of translational fidelity.

Functionally, one of the primary rRNA binding proteins, it binds directly to 16S rRNA where it nucleates assembly of the body of the 30S subunit. With S5 and S12 plays an important role in translational accuracy. The chain is Small ribosomal subunit protein uS4 from Novosphingobium aromaticivorans (strain ATCC 700278 / DSM 12444 / CCUG 56034 / CIP 105152 / NBRC 16084 / F199).